Consider the following 1923-residue polypeptide: Endoribonuclease Dicer (1923 aa).

Residues 51–227 (LLEAALDHNT…ELEEKIQKLE (177 aa)) form the Helicase ATP-binding domain. Position 64-71 (64-71 (LNTGSGKT)) interacts with ATP. The DECH box motif lies at 175–178 (DECH). The tract at residues 256 to 595 (DCGPFTDRSG…LRNKCSKSVD (340 aa)) is required for interaction with PRKRA and TARBP2. The interval 410–433 (VSWSDSEDDEEDEEIEEKEKPETN) is disordered. 2 positions are modified to phosphoserine: Ser-413 and Ser-415. Positions 414-425 (DSEDDEEDEEIE) are enriched in acidic residues. The Helicase C-terminal domain occupies 433–602 (NFPSPFTNIL…SVDTGEADTE (170 aa)). The Dicer dsRNA-binding fold domain occupies 629 to 721 (AIGHVNRYCA…MPVGKETVKY (93 aa)). The PAZ domain maps to 894–1041 (KFMEDIEKSE…LVPELCAIHP (148 aa)). Ser-1015 and Ser-1160 each carry phosphoserine. 2 stretches are compositionally biased toward polar residues: residues 1246 to 1255 (NANTSTSDGS) and 1277 to 1290 (SEQS…SRTL). The tract at residues 1246 to 1291 (NANTSTSDGSPVTAAVPGTTETGEAPPDRTASEQSPSPGYSSRTLG) is disordered. The region spanning 1276–1404 (ASEQSPSPGY…TEKWEKDEMT (129 aa)) is the RNase III 1 domain. Residues Glu-1316, Glu-1396, and Glu-1399 each coordinate Mg(2+). Phosphoserine is present on residues Ser-1461, Ser-1469, and Ser-1471. One can recognise an RNase III 2 domain in the interval 1667 to 1825 (FENFEKKINY…LAGAIYMDSG (159 aa)). Positions 1706, 1811, and 1814 each coordinate Mg(2+). Residues 1853–1915 (SPVRELLEME…ARRALRSLKA (63 aa)) form the DRBM domain. Ser-1869 is subject to Phosphoserine.

It belongs to the helicase family. Dicer subfamily. As to quaternary structure, component of the RISC loading complex (RLC), or micro-RNA (miRNA) loading complex (miRLC), which is composed of DICER1, AGO2 and TARBP2; DICER1 and TARBP2 are required to process precursor miRNAs (pre-miRNAs) to mature miRNAs and then load them onto AGO2. Note that the trimeric RLC/miRLC is also referred to as RISC. Interacts with DHX9, AGO1, PIWIL1 and PRKRA. Interacts with AGO2, TARBP2, EIF6, MOV10 and RPL7A (60S ribosome subunit); they form a large RNA-induced silencing complex (RISC). Interacts with BCDIN3D. Interacts (via Dicer dsRNA-binding fold domain) with ALOX5 (via PLAT domain); this interaction enhances arachidonate 5-lipoxygenase activity and modifies the miRNA precursor processing activity of DICER1. Mg(2+) serves as cofactor. The cofactor is Mn(2+).

Its subcellular location is the cytoplasm. The enzyme catalyses Endonucleolytic cleavage to 5'-phosphomonoester.. In terms of biological role, double-stranded RNA (dsRNA) endoribonuclease playing a central role in short dsRNA-mediated post-transcriptional gene silencing. Cleaves naturally occurring long dsRNAs and short hairpin pre-microRNAs (miRNA) into fragments of twenty-one to twenty-three nucleotides with 3' overhang of two nucleotides, producing respectively short interfering RNAs (siRNA) and mature microRNAs. SiRNAs and miRNAs serve as guide to direct the RNA-induced silencing complex (RISC) to complementary RNAs to degrade them or prevent their translation. Gene silencing mediated by siRNAs, also called RNA interference, controls the elimination of transcripts from mobile and repetitive DNA elements of the genome but also the degradation of exogenous RNA of viral origin for instance. The miRNA pathway on the other side is a mean to specifically regulate the expression of target genes. In Bos taurus (Bovine), this protein is Endoribonuclease Dicer (DICER1).